The primary structure comprises 295 residues: Glutamyl-Q tRNA(Asp) synthetase (295 aa).

Residues 5-9 (RFAPS) and E41 each bind L-glutamate. The short motif at 8–18 (PSPTGLLHIGS) is the 'HIGH' region element. 4 residues coordinate Zn(2+): C97, C99, Y117, and C121. L-glutamate contacts are provided by Y178 and R196. A 'KMSKS' region motif is present at residues 234–238 (KWSKQ). K237 contributes to the ATP binding site.

This sequence belongs to the class-I aminoacyl-tRNA synthetase family. GluQ subfamily. Zn(2+) serves as cofactor.

Catalyzes the tRNA-independent activation of glutamate in presence of ATP and the subsequent transfer of glutamate onto a tRNA(Asp). Glutamate is transferred on the 2-amino-5-(4,5-dihydroxy-2-cyclopenten-1-yl) moiety of the queuosine in the wobble position of the QUC anticodon. This is Glutamyl-Q tRNA(Asp) synthetase from Neisseria meningitidis serogroup C / serotype 2a (strain ATCC 700532 / DSM 15464 / FAM18).